Here is a 485-residue protein sequence, read N- to C-terminus: Glutamate--tRNA ligase (485 aa).

Residues 11-21 (PSPTGYMHVGN) carry the 'HIGH' region motif. Residues cysteine 108, cysteine 110, cysteine 135, and aspartate 137 each contribute to the Zn(2+) site. Positions 252–256 (KLSKR) match the 'KMSKS' region motif. Lysine 255 is a binding site for ATP.

It belongs to the class-I aminoacyl-tRNA synthetase family. Glutamate--tRNA ligase type 1 subfamily. In terms of assembly, monomer. Zn(2+) is required as a cofactor.

The protein localises to the cytoplasm. It carries out the reaction tRNA(Glu) + L-glutamate + ATP = L-glutamyl-tRNA(Glu) + AMP + diphosphate. Functionally, catalyzes the attachment of glutamate to tRNA(Glu) in a two-step reaction: glutamate is first activated by ATP to form Glu-AMP and then transferred to the acceptor end of tRNA(Glu). This chain is Glutamate--tRNA ligase, found in Clostridium botulinum (strain Okra / Type B1).